The sequence spans 411 residues: ATPase GET3B (411 aa).

A chloroplast-targeting transit peptide spans 1–67 (MATLSSYLLS…RRRNSLQVKS (67 aa)). Residue 95–102 (KGGVGKTS) participates in ATP binding. Asp-124 is an active-site residue. Asn-348 contacts ATP.

It belongs to the arsA ATPase family.

It localises to the plastid. Its subcellular location is the chloroplast stroma. It carries out the reaction ATP + H2O = ADP + phosphate + H(+). This is ATPase GET3B from Arabidopsis thaliana (Mouse-ear cress).